We begin with the raw amino-acid sequence, 512 residues long: UDP-N-acetylglucosamine--peptide N-acetylglucosaminyltransferase GtfA subunit (512 aa).

16-19 serves as a coordination point for UDP; that stretch reads GVEY. Position 251 (H251) interacts with N-acetyl-D-glucosamine. UDP-binding positions include 393 to 394 and 413 to 416; these read QH and EGFG.

This sequence belongs to the glycosyltransferase group 1 family. Glycosyltransferase 4 subfamily. Forms a heterotetramer with 2 subunits each of GtfA and GtfB. Part of the accessory SecA2/SecY2 protein translocation apparatus.

Its subcellular location is the cytoplasm. It is found in the cell membrane. It catalyses the reaction L-seryl-[protein] + UDP-N-acetyl-alpha-D-glucosamine = 3-O-[N-acetyl-alpha-D-glucosaminyl]-L-seryl-[protein] + UDP + H(+). The protein operates within protein modification; protein glycosylation. Required for polymorphic O-glycosylation of the serine-rich repeat protein (SRRP) in this bacteria. Catalyzes the first step in glycosylation by transferring N-acetylglucosamine from UDP-GlcNAc to serine residues in the substrate protein. Part of the accessory SecA2/SecY2 system specifically required to export serine-rich repeat cell wall proteins encoded in the same operon. The GtfA-GtfB complex adds GlcNAc from UDP-GlcNAc to SRRP (experimentally characterized with a truncated SSR1 construct); the alpha linkage was shown for this enzyme but not the residues glycosylated on SRRP. In Limosilactobacillus reuteri subsp. suis (strain ATCC 53608 / LMG 31752 / 1063) (Lactobacillus reuteri), this protein is UDP-N-acetylglucosamine--peptide N-acetylglucosaminyltransferase GtfA subunit.